A 739-amino-acid polypeptide reads, in one-letter code: Phosphoribosylformylglycinamidine synthase subunit PurL (739 aa).

The active site involves H54. 2 residues coordinate ATP: Y57 and K96. E98 is a binding site for Mg(2+). Residues 99 to 102 (SHNH) and R121 each bind substrate. Residue H100 is the Proton acceptor of the active site. Position 122 (D122) interacts with Mg(2+). A substrate-binding site is contributed by Q245. D273 serves as a coordination point for Mg(2+). 317–319 (ESQ) is a binding site for substrate. ATP is bound by residues D500 and G537. N538 is a binding site for Mg(2+). S540 serves as a coordination point for substrate.

Belongs to the FGAMS family. Monomer. Part of the FGAM synthase complex composed of 1 PurL, 1 PurQ and 2 PurS subunits.

The protein resides in the cytoplasm. It carries out the reaction N(2)-formyl-N(1)-(5-phospho-beta-D-ribosyl)glycinamide + L-glutamine + ATP + H2O = 2-formamido-N(1)-(5-O-phospho-beta-D-ribosyl)acetamidine + L-glutamate + ADP + phosphate + H(+). It participates in purine metabolism; IMP biosynthesis via de novo pathway; 5-amino-1-(5-phospho-D-ribosyl)imidazole from N(2)-formyl-N(1)-(5-phospho-D-ribosyl)glycinamide: step 1/2. Functionally, part of the phosphoribosylformylglycinamidine synthase complex involved in the purines biosynthetic pathway. Catalyzes the ATP-dependent conversion of formylglycinamide ribonucleotide (FGAR) and glutamine to yield formylglycinamidine ribonucleotide (FGAM) and glutamate. The FGAM synthase complex is composed of three subunits. PurQ produces an ammonia molecule by converting glutamine to glutamate. PurL transfers the ammonia molecule to FGAR to form FGAM in an ATP-dependent manner. PurS interacts with PurQ and PurL and is thought to assist in the transfer of the ammonia molecule from PurQ to PurL. The protein is Phosphoribosylformylglycinamidine synthase subunit PurL of Exiguobacterium sp. (strain ATCC BAA-1283 / AT1b).